The chain runs to 177 residues: uncharacterized protein (177 aa).

This sequence belongs to the flavoredoxin family. It depends on FMN as a cofactor.

This is an uncharacterized protein from Archaeoglobus fulgidus (strain ATCC 49558 / DSM 4304 / JCM 9628 / NBRC 100126 / VC-16).